A 419-amino-acid polypeptide reads, in one-letter code: Protein translocase subunit SecY (419 aa).

Transmembrane regions (helical) follow at residues 19–39, 64–84, 113–133, 143–163, 167–189, 202–222, 255–275, 299–319, 359–379, and 380–400; these read IMIL…ITEV, VISI…AVQF, ILTV…LRSF, FVVA…SEVI, GIGN…FLIN, SNLY…FSTL, FGQA…FLTT, IFYF…YTLI, FVGS…AAAL, and GVHP…SIIN.

It belongs to the SecY/SEC61-alpha family. Component of the plastid Sec protein translocase complex, which is composed of at least SecY and SecE.

It localises to the plastid. Its subcellular location is the chloroplast thylakoid membrane. Functionally, the central subunit of the protein translocation channel SecYE. Consists of two halves formed by TMs 1-5 and 6-10. These two domains form a lateral gate at the front which open onto the bilayer between TMs 2 and 7, and are clamped together by SecE at the back. The channel is closed by both a pore ring composed of hydrophobic SecY resides and a short helix (helix 2A) on the extracellular side of the membrane which forms a plug. In Diacronema lutheri (Unicellular marine alga), this protein is Protein translocase subunit SecY.